We begin with the raw amino-acid sequence, 351 residues long: UDP-3-O-acylglucosamine N-acyltransferase 1 (351 aa).

Residue histidine 237 is the Proton acceptor of the active site.

Belongs to the transferase hexapeptide repeat family. LpxD subfamily. In terms of assembly, homotrimer.

The catalysed reaction is a UDP-3-O-[(3R)-3-hydroxyacyl]-alpha-D-glucosamine + a (3R)-hydroxyacyl-[ACP] = a UDP-2-N,3-O-bis[(3R)-3-hydroxyacyl]-alpha-D-glucosamine + holo-[ACP] + H(+). The protein operates within bacterial outer membrane biogenesis; LPS lipid A biosynthesis. Functionally, catalyzes the N-acylation of UDP-3-O-acylglucosamine using 3-hydroxyacyl-ACP as the acyl donor. Is involved in the biosynthesis of lipid A, a phosphorylated glycolipid that anchors the lipopolysaccharide to the outer membrane of the cell. The sequence is that of UDP-3-O-acylglucosamine N-acyltransferase 1 from Legionella pneumophila (strain Paris).